The sequence spans 95 residues: Alpha-conotoxin GeXXA (95 aa).

An N-terminal signal peptide occupies residues 1 to 21; it reads MPKQEKMMLVLLILPLPYCNA. Residues 22–45 constitute a propeptide that is removed on maturation; that stretch reads AGVTTVQWGGHGDGLDRYLQRGVR. Disulfide bonds link cysteine 64–cysteine 73, cysteine 69–cysteine 81, cysteine 74–cysteine 91, and cysteine 79–cysteine 93.

The protein belongs to the conotoxin D superfamily. As to quaternary structure, homodimer. Pseudo-homodimer (identical sequence, different post-translational modifications). Expressed by the venom duct.

The protein resides in the secreted. Alpha-D-conopeptides act as non-competitive inhibitors of nicotinic acetylcholine receptors (nAChR). Through its two C-terminal domains, this homodimeric protein would bind to two nAChR allosteric sites, located outside the nAChR C-loop of the principal binding face and at the adjacent binding interface in a clockwise direction. This toxin has strong inhibitory activity on rat alpha-9-alpha-10 (CHRNA9-CHRNA10) (IC(50)=1.2 nM) and a moderate inhibitory activity on human alpha-7 (CHRNA7) (IC(50)=210 nM), rat alpha-3-beta-2 (CHRNA3-CHRNB2) (IC(50)=498 nM), rat alpha-3-beta-4 (CHRNA3-CHRNB4) (IC(50)=614 nM) and rat alpha-1-beta-1-delta-epsilon (CHRNA1-CHRNB1-CHRNE-CHRND) (IC(50)=743 nM) subtypes. Shows a weaker inhibitory activity on human alpha-9-alpha-10 (IC(50)=28 nM) than on the rat channel. This is explained by a different residue in the probable binding site (His-31 in rat alpha-10 and Leu-31 in human). The protein is Alpha-conotoxin GeXXA of Conus generalis (General cone).